The sequence spans 406 residues: Cysteine desulfurase (406 aa).

The residue at position 226 (Lys-226) is an N6-(pyridoxal phosphate)lysine. The active-site Cysteine persulfide intermediate is the Cys-364.

The protein belongs to the class-V pyridoxal-phosphate-dependent aminotransferase family. Csd subfamily. Homodimer. Interacts with SufE and the SufBCD complex composed of SufB, SufC and SufD. The interaction with SufE is required to mediate the direct transfer of the sulfur atom from the S-sulfanylcysteine. It depends on pyridoxal 5'-phosphate as a cofactor.

The protein resides in the cytoplasm. The enzyme catalyses (sulfur carrier)-H + L-cysteine = (sulfur carrier)-SH + L-alanine. The catalysed reaction is L-selenocysteine + AH2 = hydrogenselenide + L-alanine + A + H(+). It participates in cofactor biosynthesis; iron-sulfur cluster biosynthesis. Cysteine desulfurases mobilize the sulfur from L-cysteine to yield L-alanine, an essential step in sulfur metabolism for biosynthesis of a variety of sulfur-containing biomolecules. Component of the suf operon, which is activated and required under specific conditions such as oxidative stress and iron limitation. Acts as a potent selenocysteine lyase in vitro, that mobilizes selenium from L-selenocysteine. Selenocysteine lyase activity is however unsure in vivo. The protein is Cysteine desulfurase of Salmonella dublin (strain CT_02021853).